The chain runs to 451 residues: MSGDNTGNKSNSAPSKSIEELLKLLAMGQELSPAQQKEMKDYKFWKTQPVPSLSETVTEEGPIDKLKTPEDVPNDPLPLISDFEWSTLDIDDNLQLDELYKLLYDNYVEDIDATFRFKYSHEFFQWALKPPGWRKDWHVGVRVKSTGKLVAFIAATPVTFKLNKSNKVIDSVEINFLCIHKKLRNKRLAPVLIKEITRRVNKQNIWQALYTGGSILPTPLTTCRYQHRPINWSKLHDVGFSHLPPNQTKSSMVASYTLPNNPKLKGLRPMTGKDVSTVLSLLYKYQERFDIVQLFTEEEFKHWMLGHDENSDSNVVKSYVVEDENGVITDYFSYYLLPFTVLDNAQHDELGIAYLFYYASDSFEKPNYKKRLNELITDALITSKKFGVDVFNCLTCQDNTYFLKDCKFGSGDGFLNYYLFNYRTFPMDGGIDKKTKEVVEDQTSGIGVVLL.

Tetradecanoyl-CoA is bound by residues 177–179 (LCI) and 185–189 (NKRLA). Leu451 serves as the catalytic Proton acceptor; via carboxylate.

Belongs to the NMT family. As to quaternary structure, monomer.

The protein resides in the cytoplasm. The enzyme catalyses N-terminal glycyl-[protein] + tetradecanoyl-CoA = N-tetradecanoylglycyl-[protein] + CoA + H(+). Competitively inhibited by SC-58272, a peptidomimetic derived from the N-terminal sequence of a natural substrate. In terms of biological role, adds a myristoyl group to the N-terminal glycine residue of certain cellular proteins. Substrate specificity requires an N-terminal glycine in the nascent polypeptide substrates. Ser is present at position 5 in almost all known N-myristoyl proteins and Lys is commonly encountered at postion 6. Basic residues are preferred at positions 7 and 8. This Candida albicans (strain SC5314 / ATCC MYA-2876) (Yeast) protein is Glycylpeptide N-tetradecanoyltransferase (NMT1).